Reading from the N-terminus, the 412-residue chain is 1-deoxy-D-xylulose 5-phosphate reductoisomerase (412 aa).

Residues T5, G6, S7, I8, G31, N33, and N125 each coordinate NADPH. 1-deoxy-D-xylulose 5-phosphate is bound at residue K126. E127 is an NADPH binding site. D151 contributes to the Mn(2+) binding site. 4 residues coordinate 1-deoxy-D-xylulose 5-phosphate: S152, E153, S189, and H212. E153 lines the Mn(2+) pocket. Residue G218 coordinates NADPH. Residues S225, N230, K231, and E234 each coordinate 1-deoxy-D-xylulose 5-phosphate. Residue E234 participates in Mn(2+) binding.

The protein belongs to the DXR family. It depends on Mg(2+) as a cofactor. Mn(2+) serves as cofactor.

The enzyme catalyses 2-C-methyl-D-erythritol 4-phosphate + NADP(+) = 1-deoxy-D-xylulose 5-phosphate + NADPH + H(+). The protein operates within isoprenoid biosynthesis; isopentenyl diphosphate biosynthesis via DXP pathway; isopentenyl diphosphate from 1-deoxy-D-xylulose 5-phosphate: step 1/6. Its function is as follows. Catalyzes the NADPH-dependent rearrangement and reduction of 1-deoxy-D-xylulose-5-phosphate (DXP) to 2-C-methyl-D-erythritol 4-phosphate (MEP). The protein is 1-deoxy-D-xylulose 5-phosphate reductoisomerase of Prochlorococcus marinus (strain MIT 9313).